Consider the following 106-residue polypeptide: MIVTTTPSIEGKKIVEYKGIVSSEVIVGVNLVKDFIASITDIFGGRSGTYENELIRAREEALQELQNRAAMLGANAVVGIDIDYEVLGANGSMLMVSVTGTAVVVE.

The protein belongs to the UPF0145 family.

In Caldicellulosiruptor bescii (strain ATCC BAA-1888 / DSM 6725 / KCTC 15123 / Z-1320) (Anaerocellum thermophilum), this protein is UPF0145 protein Athe_0545.